Here is a 592-residue protein sequence, read N- to C-terminus: Ichor (592 aa).

Residues 114–123 (NNNYMQSAYH) show a composition bias toward polar residues. Disordered stretches follow at residues 114–156 (NNNY…VSSS), 343–377 (LQNRLQNGPPNGNSSGGGGGANQGAGIKGDPQAPT), 416–439 (LSNPTNNQATGNLHQQGGYSMQAS), and 459–527 (HTTT…DLSG). Residues 124–148 (PQNQSNPTSTTQSNGGSNSNSNNSN) are compositionally biased toward low complexity. Gly residues predominate over residues 356-369 (SSGGGGGANQGAGI). Residues 459-469 (HTTTASTTGSE) show a composition bias toward polar residues. The segment covering 488–500 (QQQQQQQQQQQQQ) has biased composition (low complexity). Residues 507 to 524 (PTTPQMSAISPSGFSASD) show a composition bias toward polar residues. C2H2-type zinc fingers lie at residues 536–558 (HRCSICNRGFLNKSNIKVHLRTH) and 564–586 (FRCDVCAKAFRQKAHLLKHQQIH).

It is found in the nucleus. Its function is as follows. Transcriptional activator. In tracheal terminal cells, regulates the transcription of factors involved in the formation of a mature apical extracellular matrix (aECM) which is essential for the integrity and shape of seamless tubes. The chain is Ichor from Drosophila melanogaster (Fruit fly).